Reading from the N-terminus, the 268-residue chain is Calpain small subunit 1 (268 aa).

N-acetylmethionine is present on Met1. Ser6 is modified (phosphoserine). Residues 96-130 (EEVRQFRKLFVQLAGDDMEVSATELMNILNKVVTR) enclose the EF-hand 1; atypical domain. Ala109, Asp112, Glu114, Glu119, Asp137, Asp152, Asp154, Thr156, Lys158, and Glu163 together coordinate Ca(2+). 4 EF-hand domains span residues 139–172 (FGID…NNIK), 169–204 (NNIK…AGFH), 205–233 (LNEH…ISCL), and 234–268 (VRLD…TMYS). Residue Lys179 is modified to N6-acetyllysine. Positions 182, 184, 186, 188, 193, and 225 each coordinate Ca(2+).

In terms of assembly, homodimer or heterodimer of a large (catalytic) and a small (regulatory) subunit. In presence of calcium, the heterodimer dissociates.

It is found in the cytoplasm. Its subcellular location is the cell membrane. Its function is as follows. Regulatory subunit of the calcium-regulated non-lysosomal thiol-protease which catalyzes limited proteolysis of substrates involved in cytoskeletal remodeling and signal transduction. Essential for embryonic development. In Mus musculus (Mouse), this protein is Calpain small subunit 1 (Capns1).